We begin with the raw amino-acid sequence, 331 residues long: Ferredoxin--NADP reductase (331 aa).

FAD contacts are provided by E34, Q42, Y47, V87, F120, D285, and T325.

The protein belongs to the ferredoxin--NADP reductase type 2 family. In terms of assembly, homodimer. The cofactor is FAD.

The enzyme catalyses 2 reduced [2Fe-2S]-[ferredoxin] + NADP(+) + H(+) = 2 oxidized [2Fe-2S]-[ferredoxin] + NADPH. The polypeptide is Ferredoxin--NADP reductase (Levilactobacillus brevis (strain ATCC 367 / BCRC 12310 / CIP 105137 / JCM 1170 / LMG 11437 / NCIMB 947 / NCTC 947) (Lactobacillus brevis)).